The primary structure comprises 597 residues: Elongation factor 4 (597 aa).

The tr-type G domain occupies 2–184; the sequence is DHIRNFSIIA…ALIAKVPPPK (183 aa). Residues 14–19 and 131–134 contribute to the GTP site; these read DHGKST and NKID.

It belongs to the TRAFAC class translation factor GTPase superfamily. Classic translation factor GTPase family. LepA subfamily.

Its subcellular location is the cell inner membrane. The enzyme catalyses GTP + H2O = GDP + phosphate + H(+). Its function is as follows. Required for accurate and efficient protein synthesis under certain stress conditions. May act as a fidelity factor of the translation reaction, by catalyzing a one-codon backward translocation of tRNAs on improperly translocated ribosomes. Back-translocation proceeds from a post-translocation (POST) complex to a pre-translocation (PRE) complex, thus giving elongation factor G a second chance to translocate the tRNAs correctly. Binds to ribosomes in a GTP-dependent manner. This chain is Elongation factor 4, found in Burkholderia multivorans (strain ATCC 17616 / 249).